The sequence spans 126 residues: Glycine cleavage system H protein (126 aa).

Residues 22–104 enclose the Lipoyl-binding domain; it reads VAYVGITDYA…YGKGWLIKIS (83 aa). N6-lipoyllysine is present on Lys-63.

This sequence belongs to the GcvH family. The glycine cleavage system is composed of four proteins: P, T, L and H. (R)-lipoate serves as cofactor.

The glycine cleavage system catalyzes the degradation of glycine. The H protein shuttles the methylamine group of glycine from the P protein to the T protein. This chain is Glycine cleavage system H protein, found in Parabacteroides distasonis (strain ATCC 8503 / DSM 20701 / CIP 104284 / JCM 5825 / NCTC 11152).